Reading from the N-terminus, the 238-residue chain is Ribosomal RNA small subunit methyltransferase G (238 aa).

Residues G77, F82, A128–E129, and R147 each bind S-adenosyl-L-methionine.

The protein belongs to the methyltransferase superfamily. RNA methyltransferase RsmG family.

The protein resides in the cytoplasm. Functionally, specifically methylates the N7 position of guanine in position 535 of 16S rRNA. The protein is Ribosomal RNA small subunit methyltransferase G of Geobacillus kaustophilus (strain HTA426).